The following is a 191-amino-acid chain: Nascent polypeptide-associated complex subunit alpha (191 aa).

Positions 24 to 89 (SRPERKARKA…AKVEDPNSAA (66 aa)) constitute an NAC-A/B domain. The tract at residues 126 to 149 (QDAPSADSSAPAPSGEATDASASG) is disordered. Over residues 127 to 139 (DAPSADSSAPAPS) the composition is skewed to low complexity. A UBA domain is found at 153–191 (VSDEEIQLIVAQTGVDEAKAREAYISEKGDLINAIMKLQ).

The protein belongs to the NAC-alpha family. In terms of assembly, part of the nascent polypeptide-associated complex (NAC), consisting of EGD2 and EGD1. NAC associates with ribosomes via EGD1.

Its subcellular location is the cytoplasm. The protein resides in the nucleus. Functionally, component of the nascent polypeptide-associated complex (NAC), a dynamic component of the ribosomal exit tunnel, protecting the emerging polypeptides from interaction with other cytoplasmic proteins to ensure appropriate nascent protein targeting. The NAC complex also promotes mitochondrial protein import by enhancing productive ribosome interactions with the outer mitochondrial membrane and blocks the inappropriate interaction of ribosomes translating non-secretory nascent polypeptides with translocation sites in the membrane of the endoplasmic reticulum. EGD2 may also be involved in transcription regulation. This chain is Nascent polypeptide-associated complex subunit alpha (EGD2), found in Cryptococcus neoformans var. neoformans serotype D (strain B-3501A) (Filobasidiella neoformans).